Here is an 89-residue protein sequence, read N- to C-terminus: UPF0335 protein Caul_0876 (89 aa).

Belongs to the UPF0335 family.

The protein is UPF0335 protein Caul_0876 of Caulobacter sp. (strain K31).